Here is a 187-residue protein sequence, read N- to C-terminus: Transmembrane protein 272 (187 aa).

4 consecutive transmembrane segments (helical) span residues 21–41 (CFVVVLCAFLALPLSMTFIGM), 52–72 (LIPLYLLVGGIVGTLKVSLLL), 107–127 (IHLLLSLFLFLWFILGNYWVF), and 149–169 (LYLFAVGVLALSHTVLVLLLL).

It localises to the membrane. This is Transmembrane protein 272 from Homo sapiens (Human).